The sequence spans 200 residues: Coiled-coil domain-containing protein 85B (200 aa).

Residues 57-84 adopt a coiled-coil conformation; it reads LQGHLLEIRELKVINQRLQEENQELRDL. Over residues 178 to 188 the composition is skewed to low complexity; it reads DGSSSTGSVGS. Positions 178-200 are disordered; that stretch reads DGSSSTGSVGSPDQLHLVCSPDD.

The protein belongs to the CCDC85 family.

It localises to the nucleus. The protein resides in the cytoplasm. It is found in the cytoskeleton. The protein localises to the microtubule organizing center. Its subcellular location is the centrosome. It localises to the cell junction. The protein resides in the adherens junction. In terms of biological role, functions as a transcriptional repressor. May inhibit the activity of CTNNB1 in a TP53-dependent manner and thus regulate cell growth. May function in adipocyte differentiation, negatively regulating mitotic clonal expansion. Plays a role in cell-cell adhesion and epithelium development through its interaction with proteins of the beta-catenin family. In Danio rerio (Zebrafish), this protein is Coiled-coil domain-containing protein 85B (ccdc85b).